A 103-amino-acid polypeptide reads, in one-letter code: Large ribosomal subunit protein bL21 (103 aa).

The protein belongs to the bacterial ribosomal protein bL21 family. Part of the 50S ribosomal subunit. Contacts protein L20.

This protein binds to 23S rRNA in the presence of protein L20. The protein is Large ribosomal subunit protein bL21 of Borreliella burgdorferi (strain ZS7) (Borrelia burgdorferi).